Reading from the N-terminus, the 177-residue chain is Large ribosomal subunit protein uL6 (177 aa).

This sequence belongs to the universal ribosomal protein uL6 family. Part of the 50S ribosomal subunit.

Its function is as follows. This protein binds to the 23S rRNA, and is important in its secondary structure. It is located near the subunit interface in the base of the L7/L12 stalk, and near the tRNA binding site of the peptidyltransferase center. This chain is Large ribosomal subunit protein uL6, found in Pseudomonas putida (strain W619).